Reading from the N-terminus, the 440-residue chain is Probable carboxypeptidase AFUB_072730 (440 aa).

The N-terminal stretch at 1–16 (MKPLTSLLLSAALSAA) is a signal peptide. N87 and N149 each carry an N-linked (GlcNAc...) asparagine glycan. Residue D165 participates in Zn(2+) binding. E197 serves as the catalytic Proton acceptor. E198 serves as a coordination point for Zn(2+). 2 N-linked (GlcNAc...) asparagine glycosylation sites follow: N353 and N372.

This sequence belongs to the peptidase M20A family. The cofactor is Zn(2+).

Its subcellular location is the secreted. This is Probable carboxypeptidase AFUB_072730 from Aspergillus fumigatus (strain CBS 144.89 / FGSC A1163 / CEA10) (Neosartorya fumigata).